A 498-amino-acid polypeptide reads, in one-letter code: Na(+)/H(+) exchange regulatory cofactor NHE-RF4 (498 aa).

PDZ domains lie at Phe49 to His130, Leu157 to Glu235, Cys263 to Glu346, and Gln394 to Asn475. Ser329 is modified (phosphoserine).

Interacts with the C-terminal region of GUCY2C. Interacts with C-terminal region of SLC9A3 and the interactions decrease in response to elevated calcium ion levels. Interacts with the C-terminal region of SLC34A1. Interacts with USP2 isoform 2. Interacts (via the third PDZ domain) with SLC26A3 (via PDZ-binding motif). This interaction leads to decreased expression of SLC26A3 on the cell membrane resulting in its reduced exchanger activity. Phosphorylation at Ser-329 negatively regulates its interaction with SLC26A3. Expressed in kidney and small intestine. Not detected in heart, brain, spleen, lung, liver, skeletal muscle or testis.

The protein resides in the cell membrane. Its subcellular location is the cytoplasm. Acts as a regulatory protein that associates with GUCY2C and negatively modulates its heat-stable enterotoxin-mediated activation. Stimulates SLC9A3 activity in the presence of elevated calcium ions. The chain is Na(+)/H(+) exchange regulatory cofactor NHE-RF4 (Nherf4) from Mus musculus (Mouse).